We begin with the raw amino-acid sequence, 217 residues long: Large ribosomal subunit protein uL3 (217 aa).

Residues 131–155 (FSSSRASHGNSRSHNVPGSIGMAQD) are disordered. Over residues 132 to 145 (SSSRASHGNSRSHN) the composition is skewed to low complexity. Position 154 is an N5-methylglutamine (Q154).

The protein belongs to the universal ribosomal protein uL3 family. Part of the 50S ribosomal subunit. Forms a cluster with proteins L14 and L19. Post-translationally, methylated by PrmB.

Functionally, one of the primary rRNA binding proteins, it binds directly near the 3'-end of the 23S rRNA, where it nucleates assembly of the 50S subunit. This chain is Large ribosomal subunit protein uL3, found in Nitrosomonas eutropha (strain DSM 101675 / C91 / Nm57).